The following is a 118-amino-acid chain: Small ribosomal subunit protein uS13 (118 aa).

Positions 96–118 are disordered; that stretch reads PLRGQRTRTNARTRKGPRKAIKK.

This sequence belongs to the universal ribosomal protein uS13 family. As to quaternary structure, part of the 30S ribosomal subunit. Forms a loose heterodimer with protein S19. Forms two bridges to the 50S subunit in the 70S ribosome.

Its function is as follows. Located at the top of the head of the 30S subunit, it contacts several helices of the 16S rRNA. In the 70S ribosome it contacts the 23S rRNA (bridge B1a) and protein L5 of the 50S subunit (bridge B1b), connecting the 2 subunits; these bridges are implicated in subunit movement. Contacts the tRNAs in the A and P-sites. This chain is Small ribosomal subunit protein uS13, found in Stenotrophomonas maltophilia (strain K279a).